The following is a 136-amino-acid chain: Ig heavy chain V region BCL1 (136 aa).

Positions 1–19 (MGWSCIIFFLVATATGVHS) are cleaved as a signal peptide. Residues 20–135 (QVQLQQSGPE…WGQGTTLTVS (116 aa)) form the Ig-like domain.

This is Ig heavy chain V region BCL1 from Mus musculus (Mouse).